We begin with the raw amino-acid sequence, 382 residues long: Anhydro-N-acetylmuramic acid kinase (382 aa).

9–16 contacts ATP; sequence GTSLDGID.

It belongs to the anhydro-N-acetylmuramic acid kinase family.

The enzyme catalyses 1,6-anhydro-N-acetyl-beta-muramate + ATP + H2O = N-acetyl-D-muramate 6-phosphate + ADP + H(+). It functions in the pathway amino-sugar metabolism; 1,6-anhydro-N-acetylmuramate degradation. Its pathway is cell wall biogenesis; peptidoglycan recycling. In terms of biological role, catalyzes the specific phosphorylation of 1,6-anhydro-N-acetylmuramic acid (anhMurNAc) with the simultaneous cleavage of the 1,6-anhydro ring, generating MurNAc-6-P. Is required for the utilization of anhMurNAc either imported from the medium or derived from its own cell wall murein, and thus plays a role in cell wall recycling. The protein is Anhydro-N-acetylmuramic acid kinase of Bacillus cereus (strain G9842).